The chain runs to 268 residues: Tryptophan synthase alpha chain (268 aa).

Active-site proton acceptor residues include E49 and D60.

The protein belongs to the TrpA family. As to quaternary structure, tetramer of two alpha and two beta chains.

It carries out the reaction (1S,2R)-1-C-(indol-3-yl)glycerol 3-phosphate + L-serine = D-glyceraldehyde 3-phosphate + L-tryptophan + H2O. It functions in the pathway amino-acid biosynthesis; L-tryptophan biosynthesis; L-tryptophan from chorismate: step 5/5. In terms of biological role, the alpha subunit is responsible for the aldol cleavage of indoleglycerol phosphate to indole and glyceraldehyde 3-phosphate. This Salmonella paratyphi A (strain ATCC 9150 / SARB42) protein is Tryptophan synthase alpha chain.